The chain runs to 442 residues: Mimosinase, chloroplastic (442 aa).

The transit peptide at 1-35 (MALPSAFLNPFVPSPVTANPRTKFARVGKGFNVSC) directs the protein to the chloroplast. The pyridoxal 5'-phosphate site is built by tyrosine 103, arginine 105, glycine 133, methionine 134, serine 252, and threonine 254. Lysine 255 carries the N6-(pyridoxal phosphate)lysine modification.

It belongs to the trans-sulfuration enzymes family. In terms of assembly, forms homodimers. May form homotetramers from two homodimers. Requires pyridoxal 5'-phosphate as cofactor.

Its subcellular location is the plastid. It is found in the chloroplast. It catalyses the reaction L-mimosine + H2O = 3-hydroxy-4H-pyrid-4-one + pyruvate + NH4(+). The enzyme catalyses L,L-cystathionine + H2O = L-homocysteine + pyruvate + NH4(+). The catalysed reaction is an S-substituted L-cysteine + H2O = a thiol + pyruvate + NH4(+). Its function is as follows. Catalyzes the degradation of mimosine, which is a toxic secondary metabolite found in all Mimosa and Leucaena species. Catalyzes the degradation of cystathionine, but seems to have lower preference toward cystathionine over mimosine. This Mimosa pudica (Sensitive plant) protein is Mimosinase, chloroplastic.